The sequence spans 181 residues: Large ribosomal subunit protein eL18 (181 aa).

This sequence belongs to the eukaryotic ribosomal protein eL18 family.

It is found in the cytoplasm. This chain is Large ribosomal subunit protein eL18 (rpl18), found in Dictyostelium discoideum (Social amoeba).